The following is a 185-amino-acid chain: Ribosome-recycling factor (185 aa).

Belongs to the RRF family.

It localises to the cytoplasm. Its function is as follows. Responsible for the release of ribosomes from messenger RNA at the termination of protein biosynthesis. May increase the efficiency of translation by recycling ribosomes from one round of translation to another. The sequence is that of Ribosome-recycling factor from Klebsiella pneumoniae (strain 342).